Consider the following 182-residue polypeptide: ATP-dependent protease subunit HslV (182 aa).

Residue Thr7 is part of the active site. Na(+)-binding residues include Gly162, Cys165, and Thr168.

Belongs to the peptidase T1B family. HslV subfamily. In terms of assembly, a double ring-shaped homohexamer of HslV is capped on each side by a ring-shaped HslU homohexamer. The assembly of the HslU/HslV complex is dependent on binding of ATP.

It localises to the cytoplasm. The catalysed reaction is ATP-dependent cleavage of peptide bonds with broad specificity.. With respect to regulation, allosterically activated by HslU binding. Protease subunit of a proteasome-like degradation complex believed to be a general protein degrading machinery. This Legionella pneumophila subsp. pneumophila (strain Philadelphia 1 / ATCC 33152 / DSM 7513) protein is ATP-dependent protease subunit HslV.